Consider the following 529-residue polypeptide: ATP synthase F(1) complex subunit beta, mitochondrial (529 aa).

The N-terminal 47 residues, 1–47 (MLGFVGRVAAAPASGALRRLTPSASLPPAQLLLRAAPTAVHPVRDYA), are a transit peptide targeting the mitochondrion. Ser-106 carries an O-linked (GlcNAc) serine glycan. An N6-acetyllysine; alternate mark is found at Lys-124, Lys-133, and Lys-161. 3 positions are modified to N6-succinyllysine; alternate: Lys-124, Lys-133, and Lys-161. The residue at position 198 (Lys-198) is an N6-acetyllysine. ADP-binding residues include Gly-209, Val-210, Gly-211, Lys-212, Thr-213, and Val-214. Gly-209 lines the ATP pocket. Residues Gly-209, Val-210, Gly-211, Lys-212, and Thr-213 each coordinate phosphate. Residues Gly-211, Lys-212, Thr-213, and Val-214 each coordinate ATP. Thr-213 contributes to the Mg(2+) binding site. Residue Glu-238 participates in Mg(2+) binding. Arg-239 is an ATP binding site. Residues Lys-259 and Lys-264 each carry the N6-acetyllysine; alternate modification. Residues Lys-259 and Lys-264 each carry the N6-succinyllysine; alternate modification. Position 312 is a phosphothreonine (Thr-312). The residue at position 415 (Ser-415) is a Phosphoserine. Lys-426 is modified (N6-acetyllysine). At Ser-433 the chain carries Phosphoserine. An N6-acetyllysine mark is found at Lys-480 and Lys-485. N6-acetyllysine; alternate is present on Lys-522. Lys-522 carries the post-translational modification N6-succinyllysine; alternate. A Phosphoserine modification is found at Ser-529.

This sequence belongs to the ATPase alpha/beta chains family. Homotrimer. Component of the ATP synthase complex composed at least of ATP5F1A/subunit alpha, ATP5F1B/subunit beta, ATP5MC1/subunit c (homooctomer), MT-ATP6/subunit a, MT-ATP8/subunit 8, ATP5ME/subunit e, ATP5MF/subunit f, ATP5MG/subunit g, ATP5MK/subunit k, ATP5MJ/subunit j, ATP5F1C/subunit gamma, ATP5F1D/subunit delta, ATP5F1E/subunit epsilon, ATP5PF/subunit F6, ATP5PB/subunit b, ATP5PD/subunit d, ATP5PO/subunit OSCP. ATP synthase complex consists of a soluble F(1) head domain (subunits alpha(3) and beta(3)) - the catalytic core - and a membrane F(0) domain - the membrane proton channel (subunits c, a, 8, e, f, g, k and j). These two domains are linked by a central stalk (subunits gamma, delta, and epsilon) rotating inside the F1 region and a stationary peripheral stalk (subunits F6, b, d, and OSCP). Interacts with PPIF. Interacts with BCL2L1 isoform BCL-X(L); the interaction mediates the association of BCL2L1 isoform BCL-X(L) with the mitochondrial membrane F(1)F(0) ATP synthase and enhances neurons metabolic efficiency. Interacts with CLN5 and PPT1. Interacts with S100A1; this interaction increases F1-ATPase activity. Interacts with MTLN. Interacts with TTC5/STRAP; the interaction results in decreased mitochondrial ATP production. Mg(2+) serves as cofactor.

The protein localises to the mitochondrion inner membrane. The catalysed reaction is ATP + H2O + 4 H(+)(in) = ADP + phosphate + 5 H(+)(out). Functionally, catalytic subunit beta, of the mitochondrial membrane ATP synthase complex (F(1)F(0) ATP synthase or Complex V) that produces ATP from ADP in the presence of a proton gradient across the membrane which is generated by electron transport complexes of the respiratory chain. ATP synthase complex consist of a soluble F(1) head domain - the catalytic core - and a membrane F(1) domain - the membrane proton channel. These two domains are linked by a central stalk rotating inside the F(1) region and a stationary peripheral stalk. During catalysis, ATP synthesis in the catalytic domain of F(1) is coupled via a rotary mechanism of the central stalk subunits to proton translocation. In vivo, can only synthesize ATP although its ATP hydrolase activity can be activated artificially in vitro. With the subunit alpha (ATP5F1A), forms the catalytic core in the F(1) domain. In Homo sapiens (Human), this protein is ATP synthase F(1) complex subunit beta, mitochondrial.